A 288-amino-acid chain; its full sequence is UPF0494 membrane protein C212.04c (288 aa).

A run of 4 helical transmembrane segments spans residues 107–127 (WVLLIIWSIITILTIDKKFKI), 144–164 (IWGPIVIYVGLFILLLSAFNY), 174–194 (PLISMVIAWVGVVIAAFSVII), and 198–218 (IAGVIAAFSVIITATIAGVIA).

Belongs to the UPF0494 family.

The protein resides in the cytoplasm. It is found in the endoplasmic reticulum. It localises to the membrane. The sequence is that of UPF0494 membrane protein C212.04c from Schizosaccharomyces pombe (strain 972 / ATCC 24843) (Fission yeast).